Reading from the N-terminus, the 213-residue chain is ATP synthase peripheral stalk subunit OSCP, mitochondrial (213 aa).

A mitochondrion-targeting transit peptide spans 1–23; sequence MATPAVSGLSRQVRCFSTSVVRP. The SIFI-degron signature appears at 5-23; it reads AVSGLSRQVRCFSTSVVRP. K54, K60, K70, and K73 each carry N6-acetyllysine. The residue at position 90 (K90) is an N6-succinyllysine. K158 and K162 each carry N6-acetyllysine; alternate. N6-succinyllysine; alternate occurs at positions 158 and 162. Residues K172, K176, and K192 each carry the N6-acetyllysine modification. K199 bears the N6-succinyllysine mark.

Belongs to the ATPase delta chain family. In terms of assembly, component of the ATP synthase complex composed at least of ATP5F1A/subunit alpha, ATP5F1B/subunit beta, ATP5MC1/subunit c (homooctomer), MT-ATP6/subunit a, MT-ATP8/subunit 8, ATP5ME/subunit e, ATP5MF/subunit f, ATP5MG/subunit g, ATP5MK/subunit k, ATP5MJ/subunit j, ATP5F1C/subunit gamma, ATP5F1D/subunit delta, ATP5F1E/subunit epsilon, ATP5PF/subunit F6, ATP5PB/subunit b, ATP5PD/subunit d, ATP5PO/subunit OSCP. ATP synthase complex consists of a soluble F(1) head domain (subunits alpha(3) and beta(3)) - the catalytic core - and a membrane F(0) domain - the membrane proton channel (subunits c, a, 8, e, f, g, k and j). These two domains are linked by a central stalk (subunits gamma, delta, and epsilon) rotating inside the F1 region and a stationary peripheral stalk (subunits F6, b, d, and OSCP). Acetylation at Lys-162 decreases ATP production. Deacetylated by SIRT3. In terms of processing, in response to mitochondrial stress, the precursor protein is ubiquitinated by the SIFI complex in the cytoplasm before mitochondrial import, leading to its degradation. Within the SIFI complex, UBR4 initiates ubiquitin chain that are further elongated or branched by KCMF1.

Its subcellular location is the mitochondrion. It is found in the mitochondrion inner membrane. Its function is as follows. Subunit OSCP, of the mitochondrial membrane ATP synthase complex (F(1)F(0) ATP synthase or Complex V) that produces ATP from ADP in the presence of a proton gradient across the membrane which is generated by electron transport complexes of the respiratory chain. ATP synthase complex consist of a soluble F(1) head domain - the catalytic core - and a membrane F(1) domain - the membrane proton channel. These two domains are linked by a central stalk rotating inside the F(1) region and a stationary peripheral stalk. During catalysis, ATP synthesis in the catalytic domain of F(1) is coupled via a rotary mechanism of the central stalk subunits to proton translocation. In vivo, can only synthesize ATP although its ATP hydrolase activity can be activated artificially in vitro. Part of the complex F(0) domain. Part of the complex F(0) domain and the peripheric stalk, which acts as a stator to hold the catalytic alpha(3)beta(3) subcomplex and subunit a/ATP6 static relative to the rotary elements. The chain is ATP synthase peripheral stalk subunit OSCP, mitochondrial from Pongo abelii (Sumatran orangutan).